A 206-amino-acid chain; its full sequence is Large ribosomal subunit protein uL4 (206 aa).

The segment at methionine 63–glutamate 97 is disordered. Basic residues predominate over residues tyrosine 64–alanine 77.

The protein belongs to the universal ribosomal protein uL4 family. In terms of assembly, part of the 50S ribosomal subunit.

In terms of biological role, one of the primary rRNA binding proteins, this protein initially binds near the 5'-end of the 23S rRNA. It is important during the early stages of 50S assembly. It makes multiple contacts with different domains of the 23S rRNA in the assembled 50S subunit and ribosome. Forms part of the polypeptide exit tunnel. This chain is Large ribosomal subunit protein uL4, found in Rhizobium johnstonii (strain DSM 114642 / LMG 32736 / 3841) (Rhizobium leguminosarum bv. viciae).